The primary structure comprises 324 residues: Dolichyl-phosphate beta-glucosyltransferase (324 aa).

Over 1–7 the chain is Lumenal; sequence MATLLLQ. A helical membrane pass occupies residues 8–28; sequence LLGLGVALAAAALILVSIVAF. The Cytoplasmic segment spans residues 29-324; it reads ITATKMPPCY…WRLKQTRKAS (296 aa).

It belongs to the glycosyltransferase 2 family.

It is found in the endoplasmic reticulum membrane. The catalysed reaction is a di-trans,poly-cis-dolichyl phosphate + UDP-alpha-D-glucose = a di-trans,poly-cis-dolichyl beta-D-glucosyl phosphate + UDP. It functions in the pathway protein modification; protein glycosylation. In terms of biological role, dolichyl-phosphate beta-glucosyltransferase that operates in the biosynthetic pathway of dolichol-linked oligosaccharides, the glycan precursors employed in protein asparagine (N)-glycosylation. The assembly of dolichol-linked oligosaccharides begins on the cytosolic side of the endoplasmic reticulum membrane and finishes in its lumen. The sequential addition of sugars to dolichol pyrophosphate produces dolichol-linked oligosaccharides containing fourteen sugars, including two GlcNAcs, nine mannoses and three glucoses. Once assembled, the oligosaccharide is transferred from the lipid to nascent proteins by oligosaccharyltransferases. Dolichyl-phosphate beta-glucosyltransferase produces dolichyl beta-D-glucosyl phosphate/Dol-P-Glc, the glucose donor substrate used sequentially by ALG6, ALG8 and ALG10 to add glucose residues on top of the Man(9)GlcNAc(2)-PP-Dol structure. These are the three last steps in the biosynthetic pathway of dolichol-linked oligosaccharides to produce Glc(3)Man(9)GlcNAc(2)-PP-Dol. The enzyme is most probably active on the cytoplasmic side of the endoplasmic reticulum while its product Dol-P-Glc is the substrate for ALG6, ALG8 and ALG11 in the lumen of the endoplasmic reticulum. In Mus musculus (Mouse), this protein is Dolichyl-phosphate beta-glucosyltransferase.